The chain runs to 129 residues: Putative membrane protein insertion efficiency factor (129 aa).

It belongs to the UPF0161 family.

The protein resides in the cell inner membrane. Functionally, could be involved in insertion of integral membrane proteins into the membrane. The sequence is that of Putative membrane protein insertion efficiency factor from Rhodopseudomonas palustris (strain TIE-1).